Reading from the N-terminus, the 376-residue chain is Drebrin-like protein B (376 aa).

The ADF-H domain maps to 2 to 133 (SVNLSKNGAA…EPESIMEKVA (132 aa)). The stretch at 175–231 (KENFWAKAEKDEEERRIEEHRRANVEKDRLERERKEREQREAEERERRFRERSKEID) forms a coiled coil. The span at 202 to 242 (DRLERERKEREQREAEERERRFRERSKEIDGHRKQQEEVEK) shows a compositional bias: basic and acidic residues. Positions 202–288 (DRLERERKER…FTASQQEEEN (87 aa)) are disordered. A compositionally biased stretch (polar residues) spans 268–283 (ESGSVSAQPEQFTASQ). The 60-residue stretch at 317–376 (DSGMCARALYDYQAADDTEISFDPDDVIIQIEMIDDGWWRGVAPSGHFGMFPANYVELLE) folds into the SH3 domain.

The protein belongs to the ABP1 family.

It is found in the cytoplasm. It localises to the cytoskeleton. The protein localises to the cell projection. Its subcellular location is the lamellipodium. The protein resides in the ruffle. It is found in the cell cortex. It localises to the cytosol. The protein localises to the synapse. Its subcellular location is the perikaryon. The protein resides in the neuron projection. It is found in the cell membrane. It localises to the cytoplasmic vesicle. The protein localises to the clathrin-coated vesicle membrane. Its subcellular location is the golgi apparatus membrane. The protein resides in the podosome. It is found in the early endosome. It localises to the dendrite. The protein localises to the postsynaptic density. Its function is as follows. Adapter protein that binds F-actin and dynamin, and thereby plays a role in receptor-mediated endocytosis. Plays a role in the reorganization of the actin cytoskeleton, formation of cell projections, such as neurites, in neuron morphogenesis and synapse formation. Does not bind G-actin and promote actin polymerization by itself, but excerts its functions by interaction with other proteins. Required for the formation of organized podosome rosettes. The polypeptide is Drebrin-like protein B (dbnl-b) (Xenopus laevis (African clawed frog)).